Consider the following 237-residue polypeptide: Ribosomal RNA small subunit methyltransferase G (237 aa).

S-adenosyl-L-methionine is bound by residues Gly-78, Phe-83, 129-130 (AE), and Arg-148.

This sequence belongs to the methyltransferase superfamily. RNA methyltransferase RsmG family.

It is found in the cytoplasm. Specifically methylates the N7 position of a guanine in 16S rRNA. The polypeptide is Ribosomal RNA small subunit methyltransferase G (Streptococcus pyogenes serotype M6 (strain ATCC BAA-946 / MGAS10394)).